Reading from the N-terminus, the 237-residue chain is CDP-diacylglycerol--inositol 3-phosphatidyltransferase (237 aa).

The Cytoplasmic portion of the chain corresponds to 1-12 (MGKNEQKDPNVY). Residues 13 to 33 (FFVPNLIGFTRVFLVLISLYF) traverse the membrane as a helical segment. At 34 to 41 (MSWHPNYC) the chain is on the lumenal side. A helical membrane pass occupies residues 42 to 62 (TIVYLYSSLLDAFDGWAARKL). Mg(2+) is bound by residues aspartate 52 and aspartate 55. 3 residues coordinate a CDP-1,2-diacyl-sn-glycerol: glycine 56, arginine 60, and threonine 66. Residues 63 to 71 (HQATNFGAI) lie on the Cytoplasmic side of the membrane. A helical transmembrane segment spans residues 72–92 (LDMVTDRCATSCLLCFLCAAY). Residues aspartate 73 and aspartate 77 each contribute to the Mg(2+) site. Catalysis depends on aspartate 77, which acts as the Proton acceptor. At 93-94 (PK) the chain is on the lumenal side. Residues 95-115 (YAIIFQLLVSLDLASHYMHMY) form a helical membrane-spanning segment. Topologically, residues 116–144 (STLHQGASSHKTVTKKHNWMLRLYYGNNK) are cytoplasmic. Residues 145-165 (VLFIFCAANEMFFVALYLLSF) form a helical membrane-spanning segment. At 166-185 (TPRTPPKLGYLPVPSFIYST) the chain is on the lumenal side. The chain crosses the membrane as a helical span at residues 186–206 (GELPLSYPTLLAVLCGPICLA). The Cytoplasmic portion of the chain corresponds to 207 to 237 (KQIINVVQLVNAANALVKMDVEQRRAAKKLQ).

It belongs to the CDP-alcohol phosphatidyltransferase class-I family. Requires Mn(2+) as cofactor. Mg(2+) serves as cofactor.

It localises to the microsome membrane. Its subcellular location is the endoplasmic reticulum membrane. It is found in the golgi apparatus membrane. The protein resides in the mitochondrion outer membrane. The catalysed reaction is a CDP-1,2-diacyl-sn-glycerol + myo-inositol = a 1,2-diacyl-sn-glycero-3-phospho-(1D-myo-inositol) + CMP + H(+). In terms of biological role, catalyzes the synthesis of phosphatidylinositol (PtdIns). The protein is CDP-diacylglycerol--inositol 3-phosphatidyltransferase (pis1) of Schizosaccharomyces pombe (strain 972 / ATCC 24843) (Fission yeast).